Reading from the N-terminus, the 212-residue chain is Translation initiation factor IF-3 (212 aa).

This sequence belongs to the IF-3 family. Monomer.

Its subcellular location is the cytoplasm. Functionally, IF-3 binds to the 30S ribosomal subunit and shifts the equilibrium between 70S ribosomes and their 50S and 30S subunits in favor of the free subunits, thus enhancing the availability of 30S subunits on which protein synthesis initiation begins. The sequence is that of Translation initiation factor IF-3 from Synechococcus sp. (strain CC9311).